Consider the following 400-residue polypeptide: 1-deoxy-D-xylulose 5-phosphate reductoisomerase (400 aa).

5 residues coordinate NADPH: T17, G18, S19, I20, and N131. K132 is a binding site for 1-deoxy-D-xylulose 5-phosphate. Residue E133 participates in NADPH binding. Position 157 (D157) interacts with Mn(2+). 1-deoxy-D-xylulose 5-phosphate-binding residues include S158, E159, S188, and H211. Residue E159 coordinates Mn(2+). An NADPH-binding site is contributed by G217. 4 residues coordinate 1-deoxy-D-xylulose 5-phosphate: S224, N229, K230, and E233. E233 lines the Mn(2+) pocket.

It belongs to the DXR family. Mg(2+) serves as cofactor. It depends on Mn(2+) as a cofactor.

The enzyme catalyses 2-C-methyl-D-erythritol 4-phosphate + NADP(+) = 1-deoxy-D-xylulose 5-phosphate + NADPH + H(+). The protein operates within isoprenoid biosynthesis; isopentenyl diphosphate biosynthesis via DXP pathway; isopentenyl diphosphate from 1-deoxy-D-xylulose 5-phosphate: step 1/6. Its function is as follows. Catalyzes the NADPH-dependent rearrangement and reduction of 1-deoxy-D-xylulose-5-phosphate (DXP) to 2-C-methyl-D-erythritol 4-phosphate (MEP). The chain is 1-deoxy-D-xylulose 5-phosphate reductoisomerase from Pseudomonas putida (strain ATCC 700007 / DSM 6899 / JCM 31910 / BCRC 17059 / LMG 24140 / F1).